The chain runs to 395 residues: Probable alcohol dehydrogenase EutG (395 aa).

NAD(+) contacts are provided by residues Asp57, 116–120 (GSVLD), 156–160 (TTAGT), Lys178, and 197–201 (VTEGV). 4 residues coordinate Fe cation: Asp212, His216, His281, and His295. NAD(+) is bound by residues His295 and Asp354.

It belongs to the iron-containing alcohol dehydrogenase family. Fe cation is required as a cofactor.

The protein localises to the bacterial microcompartment. It catalyses the reaction ethanol + NAD(+) = acetaldehyde + NADH + H(+). It participates in amine and polyamine degradation; ethanolamine degradation. Its function is as follows. Probably acts on the acetaldehyde produced by the degradation of ethanolamine, producing ethanol. In terms of biological role, expression of the eut operon allows this bacteria to use ethanolamine (EA) as a carbon, nitrogen and energy source. It relies on cobalamin (vitamin B12) both as a cofactor for the ethanolamine ammonia-lyase (EAL) activity and to induce the operon. EA enhances bacterial survival in macrophages in a concentration-dependent manner, suggesting it is an important nutrient during infection. The sequence is that of Probable alcohol dehydrogenase EutG from Salmonella typhimurium (strain LT2 / SGSC1412 / ATCC 700720).